Here is a 294-residue protein sequence, read N- to C-terminus: Pyridoxal 5'-phosphate synthase subunit PdxS (294 aa).

Asp-24 is a D-ribose 5-phosphate binding site. The active-site Schiff-base intermediate with D-ribose 5-phosphate is the Lys-81. Gly-153 contributes to the D-ribose 5-phosphate binding site. Residue Arg-165 participates in D-glyceraldehyde 3-phosphate binding. D-ribose 5-phosphate contacts are provided by residues Gly-214 and 235–236 (GS).

This sequence belongs to the PdxS/SNZ family. In terms of assembly, homohexamer and homododecamer. In the presence of PdxT, forms a dodecamer of heterodimers.

The enzyme catalyses aldehydo-D-ribose 5-phosphate + D-glyceraldehyde 3-phosphate + L-glutamine = pyridoxal 5'-phosphate + L-glutamate + phosphate + 3 H2O + H(+). It participates in cofactor biosynthesis; pyridoxal 5'-phosphate biosynthesis. In terms of biological role, catalyzes the formation of pyridoxal 5'-phosphate from ribose 5-phosphate (RBP), glyceraldehyde 3-phosphate (G3P) and ammonia. The ammonia is provided by the PdxT subunit. Can also use ribulose 5-phosphate and dihydroxyacetone phosphate as substrates, resulting from enzyme-catalyzed isomerization of RBP and G3P, respectively. In Bacillus subtilis (strain 168), this protein is Pyridoxal 5'-phosphate synthase subunit PdxS.